The chain runs to 406 residues: NAD(P)H-quinone oxidoreductase subunit H, organellar chromatophore (406 aa).

The protein belongs to the complex I 49 kDa subunit family. As to quaternary structure, NDH is composed of at least 16 different subunits, 5 of which are encoded in the nucleus.

It localises to the plastid. It is found in the organellar chromatophore thylakoid membrane. It catalyses the reaction a quinone + NADH + H(+) = a quinol + NAD(+). In terms of biological role, NDH shuttles electrons from NAD(P)H:plastoquinone, via FMN and iron-sulfur (Fe-S) centers, to quinones in the photosynthetic chain and possibly in a chloroplast respiratory chain. The immediate electron acceptor for the enzyme in this species is believed to be plastoquinone. Couples the redox reaction to proton translocation, and thus conserves the redox energy in a proton gradient. The protein is NAD(P)H-quinone oxidoreductase subunit H, organellar chromatophore of Paulinella chromatophora.